A 194-amino-acid chain; its full sequence is MIILGVDPGLTRCGVGVIEAGEHRRLSFIHVDVVRSSPDITQDLRLLAIYNGLSEKMDRFAPDAVSIERVFAQSNRNTVLGTAQAAGLAMLAAAQRGIPVALHTPTEAKLAITGNGQAQKVQVERMVTRVLNLTKMPTPADAADALALAICHALRPAGALQGGEREQHLTAAQRQWAEAAQNSTRRRKNSDRGM.

Active-site residues include Asp-7, Glu-68, and Asp-141. Mg(2+)-binding residues include Asp-7, Glu-68, and Asp-141. Positions 162–194 are disordered; the sequence is GGEREQHLTAAQRQWAEAAQNSTRRRKNSDRGM. A compositionally biased stretch (basic residues) spans 184–194; it reads TRRRKNSDRGM.

This sequence belongs to the RuvC family. In terms of assembly, homodimer which binds Holliday junction (HJ) DNA. The HJ becomes 2-fold symmetrical on binding to RuvC with unstacked arms; it has a different conformation from HJ DNA in complex with RuvA. In the full resolvosome a probable DNA-RuvA(4)-RuvB(12)-RuvC(2) complex forms which resolves the HJ. It depends on Mg(2+) as a cofactor.

It localises to the cytoplasm. The enzyme catalyses Endonucleolytic cleavage at a junction such as a reciprocal single-stranded crossover between two homologous DNA duplexes (Holliday junction).. Functionally, the RuvA-RuvB-RuvC complex processes Holliday junction (HJ) DNA during genetic recombination and DNA repair. Endonuclease that resolves HJ intermediates. Cleaves cruciform DNA by making single-stranded nicks across the HJ at symmetrical positions within the homologous arms, yielding a 5'-phosphate and a 3'-hydroxyl group; requires a central core of homology in the junction. The consensus cleavage sequence is 5'-(A/T)TT(C/G)-3'. Cleavage occurs on the 3'-side of the TT dinucleotide at the point of strand exchange. HJ branch migration catalyzed by RuvA-RuvB allows RuvC to scan DNA until it finds its consensus sequence, where it cleaves and resolves the cruciform DNA. This Bifidobacterium longum subsp. infantis (strain ATCC 15697 / DSM 20088 / JCM 1222 / NCTC 11817 / S12) protein is Crossover junction endodeoxyribonuclease RuvC.